We begin with the raw amino-acid sequence, 242 residues long: Placenta-expressed transcript 1 protein (242 aa).

Residues 1 to 26 form the signal peptide; the sequence is MAILRSLLLPLGLLLCLWLLCSPASC. Over 27-220 the chain is Extracellular; sequence TNSTTNCKPF…TTHKSSANRA (194 aa). Asparagine 28, asparagine 81, and asparagine 106 each carry an N-linked (GlcNAc...) asparagine glycan. Residues 162-209 form a disordered region; sequence VITTPTHKPTPAPPKPTTNPQKTTTNHSIPTTSLPKPTTSLYTSHPKL. Positions 169-178 are enriched in pro residues; the sequence is KPTPAPPKPT. Low complexity predominate over residues 179–205; it reads TNPQKTTTNHSIPTTSLPKPTTSLYTS. A helical transmembrane segment spans residues 221-241; that stretch reads FLCPVREAIQILFIFLIGTLL. Residue phenylalanine 242 is a topological domain, cytoplasmic.

In terms of processing, N-glycosylated.

Its subcellular location is the membrane. The protein localises to the apical cell membrane. Functionally, modulates leading keratinocyte migration and cellular adhesion to matrix proteins during a wound-healing response and promotes wound repair. May play a role during trichilemmal differentiation of the hair follicle. The sequence is that of Placenta-expressed transcript 1 protein (PLET1) from Bos taurus (Bovine).